The sequence spans 268 residues: L-gamma-glutamyl-L-propargylglycine hydroxylase (268 aa).

It depends on Fe(2+) as a cofactor.

It catalyses the reaction L-gamma-glutamyl-L-propargylglycine + 2-oxoglutarate + O2 = L-gamma-glutamyl-(3R)-L-beta-ethynylserine + succinate + CO2. It participates in amino-acid metabolism. It functions in the pathway antibiotic biosynthesis. Functionally, involved in the biosynthesis of terminal alkyne-containing amino acids such as L-beta-ethynylserine, that are produced as antibiotics by S.cattleya. Catalyzes the hydroxylation of the dipeptide L-gamma-glutamyl-L-propargylglycine, leading to L-gamma-glutamyl-L-beta-ethynylserine. Cannot use L-propargylglycine as substrate. The sequence is that of L-gamma-glutamyl-L-propargylglycine hydroxylase from Streptantibioticus cattleyicolor (strain ATCC 35852 / DSM 46488 / JCM 4925 / NBRC 14057 / NRRL 8057) (Streptomyces cattleya).